Reading from the N-terminus, the 114-residue chain is Transcription initiation factor IIA subunit 2 (114 aa).

This sequence belongs to the TFIIA subunit 2 family. As to quaternary structure, TFIIA is a heterodimer composed of the large toa1 and the small toa2 subunits.

It localises to the nucleus. Functionally, TFIIA is a component of the transcription machinery of RNA polymerase II and plays an important role in transcriptional activation. TFIIA in a complex with tbp mediates transcriptional activity. This chain is Transcription initiation factor IIA subunit 2 (toa2), found in Fusarium vanettenii (strain ATCC MYA-4622 / CBS 123669 / FGSC 9596 / NRRL 45880 / 77-13-4) (Fusarium solani subsp. pisi).